The primary structure comprises 547 residues: Probable FMN/FAD exporter YeeO (547 aa).

A run of 11 helical transmembrane segments spans residues 94–114, 139–159, 174–194, 211–231, 246–268, 281–301, 318–338, 350–370, 404–424, 439–459, and 486–506; these read ITPLAVPIFMENACVLLMGVL, VIMAFFAAIDLGTTVVVAFSL, SLVIMTLFAVLLATLIHHFGE, LALTYLELTVLSYPAAAITLI, LLINGSLNILNIIISGILIYGLF, GLTISRYIGAVAILWVLAIGF, FSIIWEVMGIGIPASVESVLF, AGMGTSVIAGNFIAFSIAALI, VFWLSTLGLTAIAWLTAPFAG, VVVILIWLNALFMPIWSASWV, and VVVGYVLGIMLGWGVVGVWMG.

Belongs to the multi antimicrobial extrusion (MATE) (TC 2.A.66.1) family.

The protein resides in the cell inner membrane. A transporter able to export peptides and flavins. When overexpressed allows cells deleted for multiple peptidases (pepA, pepB, pepD and pepN) to grow in the presence of dipeptides Ala-Gln or Gly-Tyr which otherwise inhibit growth. Cells overexpressing this protein have decreased intracellular levels of Ala-Gln dipeptide, and in a system that produces the Ala-Gln dipeptide, overproduction of this protein increases its export. When overexpressed increases secretion of FMN and FAD but not riboflavin; intracellular concentrations of FMN and riboflavin rise, possibly to compensate for increased secretion. Increased overexpression causes slight cell elongation. The protein is Probable FMN/FAD exporter YeeO (yeeO) of Escherichia coli (strain K12).